The chain runs to 297 residues: HTH-type transcriptional regulator ArgP (297 aa).

The 57-residue stretch at 4–60 (PDYRTLQALDAVIRERGFERAAQKLCITQSAVSQRIKQLENLFGQPLLVRTIPPRPT) folds into the HTH lysR-type domain. Residues 21 to 40 (FERAAQKLCITQSAVSQRIK) constitute a DNA-binding region (H-T-H motif).

Belongs to the LysR transcriptional regulatory family. Homodimer.

In terms of biological role, controls the transcription of genes involved in arginine and lysine metabolism. This Pectobacterium carotovorum subsp. carotovorum (strain PC1) protein is HTH-type transcriptional regulator ArgP.